A 156-amino-acid polypeptide reads, in one-letter code: Small ribosomal subunit protein uS7 (156 aa).

The protein belongs to the universal ribosomal protein uS7 family. As to quaternary structure, part of the 30S ribosomal subunit. Contacts proteins S9 and S11.

Functionally, one of the primary rRNA binding proteins, it binds directly to 16S rRNA where it nucleates assembly of the head domain of the 30S subunit. Is located at the subunit interface close to the decoding center, probably blocks exit of the E-site tRNA. The polypeptide is Small ribosomal subunit protein uS7 (Shewanella sediminis (strain HAW-EB3)).